Here is a 423-residue protein sequence, read N- to C-terminus: Large ribosomal subunit protein mL37 (423 aa).

The N-terminal 29 residues, 1–29 (MALASGPARRALAGSGQLGLGGFGAPRRG), are a transit peptide targeting the mitochondrion.

Belongs to the mitochondrion-specific ribosomal protein mL37 family. Component of the mitochondrial large ribosomal subunit (mt-LSU). Mature mammalian 55S mitochondrial ribosomes consist of a small (28S) and a large (39S) subunit. The 28S small subunit contains a 12S ribosomal RNA (12S mt-rRNA) and 30 different proteins. The 39S large subunit contains a 16S rRNA (16S mt-rRNA), a copy of mitochondrial valine transfer RNA (mt-tRNA(Val)), which plays an integral structural role, and 52 different proteins. mL37 forms a heterodimer with mL65.

Its subcellular location is the mitochondrion. This chain is Large ribosomal subunit protein mL37 (MRPL37), found in Homo sapiens (Human).